A 269-amino-acid chain; its full sequence is Regulating synaptic membrane exocytosis protein 4 (269 aa).

Residues 115–233 form the C2 domain; that stretch reads PMGDVEIGLQ…DLTTLAVGWY (119 aa). Phosphoserine is present on residues Ser254 and Ser257.

As to quaternary structure, binds PPFIA3. Does not bind RAB3.

It localises to the synapse. In terms of biological role, regulates synaptic membrane exocytosis. This Mus musculus (Mouse) protein is Regulating synaptic membrane exocytosis protein 4 (Rims4).